The following is a 262-amino-acid chain: Tetrahydromethanopterin S-methyltransferase subunit C (262 aa).

Helical transmembrane passes span 35–57 (FVPS…AGAN), 70–92 (GVPS…GVLI), 97–119 (GLPV…FIVG), 140–162 (LSLM…FSAD), 172–194 (GVIA…ACIG), and 214–236 (WLIF…FWLY).

This sequence belongs to the MtrC family. The complex is composed of 8 subunits; MtrA, MtrB, MtrC, MtrD, MtrE, MtrF, MtrG and MtrH.

It localises to the cell membrane. It catalyses the reaction 5-methyl-5,6,7,8-tetrahydromethanopterin + coenzyme M + 2 Na(+)(in) = 5,6,7,8-tetrahydromethanopterin + methyl-coenzyme M + 2 Na(+)(out). It functions in the pathway one-carbon metabolism; methanogenesis from CO(2); methyl-coenzyme M from 5,10-methylene-5,6,7,8-tetrahydromethanopterin: step 2/2. Part of a complex that catalyzes the formation of methyl-coenzyme M and tetrahydromethanopterin from coenzyme M and methyl-tetrahydromethanopterin. This is an energy-conserving, sodium-ion translocating step. The polypeptide is Tetrahydromethanopterin S-methyltransferase subunit C (Methanococcus maripaludis (strain DSM 14266 / JCM 13030 / NBRC 101832 / S2 / LL)).